The sequence spans 1039 residues: uncharacterized protein (1039 aa).

The signal sequence occupies residues M1–A28. A run of 6 helical transmembrane segments spans residues I326–G346, Y354–T374, M387–M407, M491–V511, C517–F537, and M551–V571. Positions K654–S680 are disordered. Residues I710–F730 traverse the membrane as a helical segment. Disordered regions lie at residues L799–V875, I917–N949, and L1004–P1039. Residues G802–G811 are compositionally biased toward gly residues. The segment covering G812–S836 has biased composition (low complexity). A compositionally biased stretch (polar residues) spans G843–N861. Composition is skewed to basic and acidic residues over residues I917 to E939 and L1004 to S1033.

The protein belongs to the TrbL/VirB6 family.

Its subcellular location is the cell membrane. This is an uncharacterized protein from Rickettsia bellii (strain RML369-C).